The sequence spans 467 residues: MRLPREIGPIHFVGIGGIGMSGIAEVLCNLGYTVQGSDASEGANVSRLRDKGIAIHVGHQAENVAGADVVVVSTAIKRDNPELLAARAQRIPVVRRAEMLAELMRLKSCVAIAGTHGKTTTTSMVAALLDAGEFDPTVINGGIINAYGTNARLGAGEWMVVEADESDGTFLKLPADVAIVTNVDPEHLDHFKTFDAVQEAFRDFVENVPFYGFAVMCIDHPVVQALVGKIEDRRIITYGENPQADVRLLDLTPNGGSSAFRVAFRDRKAGTAHEIADLVLPMPGRHNALNATAAIAVAHELGLSDDTIRKALAGFGGVRRRFTKTGEWNGVTIIDDYGHHPVEIAAVLKAARESTKGKVIAVVQPHRFTRLQSLFEEFCTCFNDADVVVVAEVYPAGEAPIEGVDRDHFVLGLRAHGHREVIPLQESAALASVVYGAAHSGDYVVCLGAGNITQWAYALPGELKALD.

Position 114-120 (114-120 (GTHGKTT)) interacts with ATP.

The protein belongs to the MurCDEF family.

It is found in the cytoplasm. It catalyses the reaction UDP-N-acetyl-alpha-D-muramate + L-alanine + ATP = UDP-N-acetyl-alpha-D-muramoyl-L-alanine + ADP + phosphate + H(+). It functions in the pathway cell wall biogenesis; peptidoglycan biosynthesis. Its function is as follows. Cell wall formation. This is UDP-N-acetylmuramate--L-alanine ligase from Rhodopseudomonas palustris (strain BisB18).